A 326-amino-acid polypeptide reads, in one-letter code: Tetraketide alpha-pyrone reductase 1 (326 aa).

NADP(+)-binding positions include 8–32, Lys-44, and Tyr-162; that span reads VCVT…GYEV.

It belongs to the NAD(P)-dependent epimerase/dehydratase family. Dihydroflavonol-4-reductase subfamily. In terms of assembly, interacts with 4CLL1/ACOS5, PKSA and PKSB. Specifically expressed in anther tapetal cells during microspores development.

It is found in the cytoplasm. The protein resides in the nucleus. The protein localises to the endoplasmic reticulum. Its function is as follows. Involved in the biosynthesis of hydroxylated tetraketide compounds that serve as sporopollenin precursors (the main constituents of exine). Is essential for pollen wall development. Acts on tetraketide alpha-pyrones and reduces the carbonyl function on the tetraketide alkyl chain to a secondary alcohol function. This Arabidopsis thaliana (Mouse-ear cress) protein is Tetraketide alpha-pyrone reductase 1 (TKPR1).